The primary structure comprises 122 residues: Selenoprotein H (122 aa).

The residue at position 20 (lysine 20) is an N6-acetyllysine. The segment at residues 41 to 44 (CTSU) is a cross-link (cysteinyl-selenocysteine (Cys-Sec); redox-active). Position 44 (selenocysteine 44) is a non-standard amino acid, selenocysteine.

This sequence belongs to the SelWTH family.

In terms of biological role, may be involved in a redox-related process. The protein is Selenoprotein H of Macaca fascicularis (Crab-eating macaque).